The chain runs to 338 residues: tRNA methyltransferase 10 homolog A (338 aa).

Disordered regions lie at residues 1-91 (MSSE…DRKR) and 296-338 (RVEG…SVPH). Serine 22 bears the Phosphoserine mark. A coiled-coil region spans residues 52-80 (KQWEEQRELRKQKRKEKRKRKQLERQCQP). Over residues 61–73 (RKQKRKEKRKRKQ) the composition is skewed to basic residues. In terms of domain architecture, SAM-dependent MTase TRM10-type spans 88-279 (DRKRIRRDVV…TILPQRKGAV (192 aa)). Residues 308–328 (EENRHELDSTHEEEKQDKENS) are compositionally biased toward basic and acidic residues. Residues 329–338 (TESTVNSVPH) show a composition bias toward polar residues. Residue serine 335 is modified to Phosphoserine.

This sequence belongs to the class IV-like SAM-binding methyltransferase superfamily. TRM10 family. In terms of assembly, interacts with tRNA.

The protein localises to the nucleus. The protein resides in the nucleolus. The catalysed reaction is guanosine(9) in tRNA + S-adenosyl-L-methionine = N(1)-methylguanosine(9) in tRNA + S-adenosyl-L-homocysteine + H(+). Functionally, S-adenosyl-L-methionine-dependent guanine N(1)-methyltransferase that catalyzes the formation of N(1)-methylguanine at position 9 (m1G9) in tRNAs. Probably not able to catalyze formation of N(1)-methyladenine at position 9 (m1A9) in tRNAs. In Bos taurus (Bovine), this protein is tRNA methyltransferase 10 homolog A (TRMT10A).